A 525-amino-acid polypeptide reads, in one-letter code: Glutamate--cysteine ligase (525 aa).

The protein belongs to the glutamate--cysteine ligase type 1 family. Type 1 subfamily.

The enzyme catalyses L-cysteine + L-glutamate + ATP = gamma-L-glutamyl-L-cysteine + ADP + phosphate + H(+). It participates in sulfur metabolism; glutathione biosynthesis; glutathione from L-cysteine and L-glutamate: step 1/2. This Hahella chejuensis (strain KCTC 2396) protein is Glutamate--cysteine ligase.